The sequence spans 457 residues: Pancreatic triacylglycerol lipase (457 aa).

Positions 1–7 (LLLGAVA) are cleaved as a signal peptide. 2 cysteine pairs are disulfide-bonded: cysteine 12-cysteine 18 and cysteine 99-cysteine 110. The active-site Nucleophile is serine 161. Catalysis depends on aspartate 185, which acts as the Charge relay system. Glutamate 196, arginine 199, aspartate 201, and aspartate 204 together coordinate Ca(2+). Residues cysteine 246 and cysteine 270 are joined by a disulfide bond. Histidine 272 (charge relay system) is an active-site residue. 2 disulfides stabilise this stretch: cysteine 294/cysteine 305 and cysteine 308/cysteine 313. Residue asparagine 343 is glycosylated (N-linked (GlcNAc...) asparagine). Residues 347–457 (WRYQIAVTLS…EDILLTLTPC (111 aa)) form the PLAT domain. Cysteine 441 and cysteine 457 are oxidised to a cystine.

This sequence belongs to the AB hydrolase superfamily. Lipase family. Forms a 1:1 stoichiometric complex with (pro)colipase/CLPS.

The protein resides in the secreted. The catalysed reaction is a triacylglycerol + H2O = a diacylglycerol + a fatty acid + H(+). It carries out the reaction 1,2,3-tributanoylglycerol + H2O = dibutanoylglycerol + butanoate + H(+). It catalyses the reaction 1,2,3-tri-(9Z-octadecenoyl)-glycerol + H2O = di-(9Z)-octadecenoylglycerol + (9Z)-octadecenoate + H(+). The enzyme catalyses all-trans-retinyl hexadecanoate + H2O = all-trans-retinol + hexadecanoate + H(+). The catalysed reaction is 1,2-di-(9Z-octadecenoyl)-glycerol + H2O = (9Z-octadecenoyl)-glycerol + (9Z)-octadecenoate + H(+). Inhibited by bile salts, is reactivated by (pro)colipase/CLPS. In terms of biological role, plays an important role in fat metabolism. It preferentially splits the esters of long-chain fatty acids at positions 1 and 3, producing mainly 2-monoacylglycerol and free fatty acids, and shows considerably higher activity against insoluble emulsified substrates than against soluble ones. In Myocastor coypus (Coypu), this protein is Pancreatic triacylglycerol lipase (PNLIP).